A 163-amino-acid polypeptide reads, in one-letter code: NADPH-dependent 7-cyano-7-deazaguanine reductase (163 aa).

The span at 1 to 10 shows a compositional bias: basic residues; the sequence is MSKPPRRSPR. A disordered region spans residues 1–23; sequence MSKPPRRSPRKPTPASPELQLGH. C61 (thioimide intermediate) is an active-site residue. The active-site Proton donor is the D68. Residues 83–85 and 102–103 each bind substrate; these read LES and HE.

It belongs to the GTP cyclohydrolase I family. QueF type 1 subfamily.

It localises to the cytoplasm. The catalysed reaction is 7-aminomethyl-7-carbaguanine + 2 NADP(+) = 7-cyano-7-deazaguanine + 2 NADPH + 3 H(+). Its pathway is tRNA modification; tRNA-queuosine biosynthesis. In terms of biological role, catalyzes the NADPH-dependent reduction of 7-cyano-7-deazaguanine (preQ0) to 7-aminomethyl-7-deazaguanine (preQ1). In Rhodopseudomonas palustris (strain BisA53), this protein is NADPH-dependent 7-cyano-7-deazaguanine reductase.